The chain runs to 431 residues: Probable ganciclovir kinase (431 aa).

The 290-residue stretch at 79 to 368 (PQEDAVLGSG…KLSIGIDSFG (290 aa)) folds into the Protein kinase domain. ATP-binding positions include 85–93 (LGSGSFGSV) and Lys-103. The active-site Proton acceptor is the Asp-195.

This sequence belongs to the protein kinase superfamily. Tyr protein kinase family. HCMV ganciclovir subfamily.

Functionally, phosphorylates the antiviral nucleoside analog ganciclovir. This Saimiriine herpesvirus 2 (strain 11) (SaHV-2) protein is Probable ganciclovir kinase (36).